The following is a 206-amino-acid chain: Guanylate kinase (206 aa).

In terms of domain architecture, Guanylate kinase-like spans 4–182 (ANLFIISAPS…AVQNLIHIIS (179 aa)). 11-18 (APSGAGKT) provides a ligand contact to ATP.

This sequence belongs to the guanylate kinase family.

The protein resides in the cytoplasm. The enzyme catalyses GMP + ATP = GDP + ADP. Functionally, essential for recycling GMP and indirectly, cGMP. The chain is Guanylate kinase from Coxiella burnetii (strain RSA 493 / Nine Mile phase I).